The chain runs to 581 residues: MKELIQSLLEQTLESLKAQGIVPADFEARIQVDRTKDKSHGDLATNLAMMLTKVAGKPPREMAQLIIDNLPASAQVAKVEIAGPGFINFFIDDNALANQLKAALGDAMLGVKAAAPQTVVVDYSSPNLAKEMHVGHLRSTIIGDSVVRALEFLGHKVIRQNHVGDWGTQFGMLLAYMEELRAQGDDKANLELSDLESFYRAAKLRFDESDEFATRARQLVVELQSGDAYCNKLWREFNDISLSHCHDVYARLGVSLTRKDVHGESAYNADLAQVVADLDAKGLLAISDGAKVVFQEEFRNKDGEPLPVIIQKADGGFLYATTDLAAMRYRSGVLNADRVLYFVDLRQALHFQQVFSLARTAGFVRDNMTLEHMGFGTMNGEDGRPFKTRSGGVVKLVDLLDEAVERAEQLVRSKNPDMDETEVKEIARVVGIASVKYADLSKNRSSDYIFSFEQMLSFEGNTAPYLLYAYTRVAGIFKKAENIDLTNAELVLDHDKEKELGNKLAQFGEILARMVDKGQPHILCGYLYELAGAFSSFYEACPVLSADSETARDSRLLLSRLTADTLKQGLSLLGIETLERM.

The 'HIGH' region signature appears at 126–136 (PNLAKEMHVGH).

This sequence belongs to the class-I aminoacyl-tRNA synthetase family. As to quaternary structure, monomer.

It is found in the cytoplasm. It catalyses the reaction tRNA(Arg) + L-arginine + ATP = L-arginyl-tRNA(Arg) + AMP + diphosphate. This is Arginine--tRNA ligase from Shewanella amazonensis (strain ATCC BAA-1098 / SB2B).